Here is a 254-residue protein sequence, read N- to C-terminus: 3-deoxy-manno-octulosonate cytidylyltransferase (254 aa).

It belongs to the KdsB family.

It localises to the cytoplasm. The catalysed reaction is 3-deoxy-alpha-D-manno-oct-2-ulosonate + CTP = CMP-3-deoxy-beta-D-manno-octulosonate + diphosphate. The protein operates within nucleotide-sugar biosynthesis; CMP-3-deoxy-D-manno-octulosonate biosynthesis; CMP-3-deoxy-D-manno-octulosonate from 3-deoxy-D-manno-octulosonate and CTP: step 1/1. It participates in bacterial outer membrane biogenesis; lipopolysaccharide biosynthesis. Activates KDO (a required 8-carbon sugar) for incorporation into bacterial lipopolysaccharide in Gram-negative bacteria. The protein is 3-deoxy-manno-octulosonate cytidylyltransferase of Pseudoalteromonas atlantica (strain T6c / ATCC BAA-1087).